Reading from the N-terminus, the 273-residue chain is Zinc finger protein 32 (273 aa).

3 C2H2-type zinc fingers span residues 77-99 (YECQ…ERIH), 105-127 (FECT…QRIH), and 133-155 (YQCK…ERLH). Positions 79, 82, 95, 99, 107, 110, 123, 127, 141, 144, 157, 161, 198, 201, 214, 218, 247, 250, 263, and 267 each coordinate Zn(2+). C2H2-type zinc fingers lie at residues 161–183 (YECA…RRVH) and 189–211 (YRCD…IRVH). The C2H2-type 6 zinc-finger motif lies at 217–239 (YACTQCRKSFHTRGNCILHGKIH). A CCHC-type zinc finger spans residues 245–267 (YLCGQCGKSFTQRGSLAVHQRSC).

Belongs to the krueppel C2H2-type zinc-finger protein family.

Its subcellular location is the nucleus. In terms of biological role, may be involved in transcriptional regulation. This is Zinc finger protein 32 (ZNF32) from Homo sapiens (Human).